The primary structure comprises 320 residues: Putative FBD-associated F-box protein At3g60710 (320 aa).

Residues Glu2 to Ile48 form the F-box domain. The FBD domain maps to Met212–Leu268.

The chain is Putative FBD-associated F-box protein At3g60710 from Arabidopsis thaliana (Mouse-ear cress).